A 301-amino-acid polypeptide reads, in one-letter code: 2-methylisocitrate lyase (301 aa).

Residue 53–55 (SGA) participates in substrate binding. Residues Asp92 and Asp94 each coordinate Mg(2+). Residues 129–130 (CG), Arg162, Glu192, 214–216 (NMT), Arg245, and Arg274 contribute to the substrate site.

It belongs to the isocitrate lyase/PEP mutase superfamily. Methylisocitrate lyase family. Requires Mg(2+) as cofactor.

It carries out the reaction 3-hydroxybutane-1,2,3-tricarboxylate = pyruvate + succinate. Involved in the methylcitric acid cycle. Catalyzes the cleavage of 2-methylisocitrate to yield pyruvate and succinate. This chain is 2-methylisocitrate lyase, found in Bacillus subtilis (strain 168).